The chain runs to 425 residues: Na(+)/H(+) antiporter NhaA 1 (425 aa).

A run of 11 helical transmembrane segments spans residues 20-40 (AGGV…NSPL), 65-85 (PHLW…GLEI), 102-122 (LPFI…LAVT), 131-151 (GWAI…ALLG), 160-180 (LFLT…IALA), 183-203 (ASIK…MMAM), 218-238 (FVLL…AGVL), 272-292 (FLIV…GFSL), 303-323 (IAAG…WAAV), 342-362 (LSVL…LAFA), and 373-393 (LGVI…LRFA).

This sequence belongs to the NhaA Na(+)/H(+) (TC 2.A.33) antiporter family.

Its subcellular location is the cell inner membrane. It carries out the reaction Na(+)(in) + 2 H(+)(out) = Na(+)(out) + 2 H(+)(in). Na(+)/H(+) antiporter that extrudes sodium in exchange for external protons. The polypeptide is Na(+)/H(+) antiporter NhaA 1 (Novosphingobium aromaticivorans (strain ATCC 700278 / DSM 12444 / CCUG 56034 / CIP 105152 / NBRC 16084 / F199)).